Here is a 942-residue protein sequence, read N- to C-terminus: MSRNASNAYLKNGNSTPSNDKRSPSSLSQRSKTSTRSSKPFLQRLFPSTWFKNESSSRHPLTSIKENDTQTIGRRPSMRVKLFGKDKSKASMSTNDLPSHPRSQSVMGFSSSTSQLTGTSNSSRTRLNKDMRRDFGMTSMSSITSSTPTPSQLPVRPSTSLSFFDDIPLGPSFSAETILSSLSISTSNNAMSKTTPAPPLVTTKSISADQDDFYTCKEEVSTYEGLNSQIELSPVKSRDSQNKSAKNLSTAYRTVSGESRNLMVDPKVSPYGNSRTPLRDSSNYLRDRRSINRQSSLSIPKSTSETTRKTLALSNGGIDQSRVSSDSFKVDDSSAKMAAIDIWEGSQHIVSNDKALSWLVTDKPYNKAVLKHYISLYDFENTDILQSLRMICGNLYVHGETQELDHFLGEFSNQWCRTNPKGLFCNPQIVHSIAFSLLLLNTDLHIAELSASERMSRNQFVENTYRSIKQALNDSFDGNEEKKNAFFLSSYKSFASNESCNSPAIHSLHGNLSPGKSAELKKLHKRSLSSKVLEEAFSSYWMSALKEMYHSIKVSMILQPDRYLDMNFDFNDTNKINNPSSTANQTRHFHSVSEIKKLPMGTDELEKSMVRPSTAMYINRQNENAVSIDKSRDLQGTVNTKEIRSRSALSYQNDRPLATDLPSVIYNHKHPNVVSPFYVHPYIKQGILKFQSKESHKFRKKEVWSTVLAVLQRDVFTLYNLNTPNLSYDPKDLDISKVGKPVIKTTIIASLAKPFPSSEDAVVLKSTNSLYFDLETSSQLKLRFAGPSPKDAQGWIDALNYWAARSSKVPLLGGVTNVDYGWARCTGQRAQKSNAQLLKTKTDKIIVHKWQPQPVNTIPSSLSLGEQLSAFNNFMKLLKKTNDEHQNLHKEMLVVLSSQPKSTFRRAVENWKYKSDYLQLNLVRLRVYISVLEKYKSQAQNS.

Positions 1 to 18 (MSRNASNAYLKNGNSTPS) are enriched in polar residues. Disordered regions lie at residues 1–128 (MSRN…TRLN) and 259–308 (SRNL…ETTR). Over residues 24–40 (PSSLSQRSKTSTRSSKP) the composition is skewed to low complexity. Polar residues-rich tracts occupy residues 50–60 (WFKNESSSRHP), 90–125 (ASMSTNDLPSHPRSQSVMGFSSSTSQLTGTSNSSRT), 271–284 (YGNSRTPLRDSSNY), and 292–305 (NRQSSLSIPKSTSE). Positions 295–497 (SSLSIPKSTS…LSSYKSFASN (203 aa)) constitute an SEC7 domain. Residues 681–804 (PYIKQGILKF…WIDALNYWAA (124 aa)) enclose the PH domain.

The chain is PH and SEC7 domain-containing protein C11E3.11c from Schizosaccharomyces pombe (strain 972 / ATCC 24843) (Fission yeast).